The primary structure comprises 288 residues: Ribonuclease HIII (288 aa).

Residues 76 to 288 (YSAIGSDEVG…KNITKQFIKN (213 aa)) enclose the RNase H type-2 domain. Residues aspartate 82, glutamate 83, and aspartate 185 each coordinate a divalent metal cation.

The protein belongs to the RNase HII family. RnhC subfamily. Requires Mn(2+) as cofactor. Mg(2+) is required as a cofactor.

The protein localises to the cytoplasm. The enzyme catalyses Endonucleolytic cleavage to 5'-phosphomonoester.. Its function is as follows. Endonuclease that specifically degrades the RNA of RNA-DNA hybrids. The protein is Ribonuclease HIII of Phytoplasma mali (strain AT).